A 339-amino-acid chain; its full sequence is Dihydroorotate dehydrogenase (quinone) (339 aa).

Residues 62–66 and Thr-86 each bind FMN; that span reads AGMDK. Lys-66 is a binding site for substrate. 111 to 115 provides a ligand contact to substrate; it reads NRMGF. The FMN site is built by Asn-139 and Asn-172. Residue Asn-172 participates in substrate binding. Ser-175 (nucleophile) is an active-site residue. Asn-177 lines the substrate pocket. The FMN site is built by Lys-217 and Thr-245. 246–247 is a binding site for substrate; the sequence is NT. FMN-binding positions include Gly-268, Gly-297, and 318 to 319; that span reads FS.

Belongs to the dihydroorotate dehydrogenase family. Type 2 subfamily. Monomer. Requires FMN as cofactor.

Its subcellular location is the cell membrane. The enzyme catalyses (S)-dihydroorotate + a quinone = orotate + a quinol. It participates in pyrimidine metabolism; UMP biosynthesis via de novo pathway; orotate from (S)-dihydroorotate (quinone route): step 1/1. Catalyzes the conversion of dihydroorotate to orotate with quinone as electron acceptor. This chain is Dihydroorotate dehydrogenase (quinone), found in Shewanella halifaxensis (strain HAW-EB4).